The following is a 362-amino-acid chain: Hydroxycarboxylate dehydrogenase A (362 aa).

Positions 173, 257, and 274 each coordinate Zn(2+).

Belongs to the iron-containing alcohol dehydrogenase family. The cofactor is Zn(2+).

The catalysed reaction is 2-hydroxybutanoate + NADP(+) = 2-oxobutanoate + NADPH + H(+). It catalyses the reaction 2-hydroxyglutarate + NADP(+) = 2-oxoglutarate + NADPH + H(+). Its function is as follows. Catalyzes the NADPH-dependent reduction of 2-oxoglutarate and 2-oxobutanoate, leading to the respective 2-hydroxycarboxylate. Cannot use NADH instead of NADPH as a redox partner. Do not catalyze the reverse reactions. This chain is Hydroxycarboxylate dehydrogenase A, found in Escherichia coli (strain K12).